The chain runs to 444 residues: Deoxyguanosinetriphosphate triphosphohydrolase-like protein (444 aa).

The disordered stretch occupies residues 1-26 (MIASPWHERRLNEDKKRRNDHRSPFQ). Residues 59-250 (RLTHSLEVSQ…MELADDIAYA (192 aa)) form the HD domain.

Belongs to the dGTPase family. Type 2 subfamily.

In Shewanella woodyi (strain ATCC 51908 / MS32), this protein is Deoxyguanosinetriphosphate triphosphohydrolase-like protein.